Here is a 691-residue protein sequence, read N- to C-terminus: Ubiquitin-like domain-containing protein CIP73 (691 aa).

A Ubiquitin-like domain is found at 22–97 (IEIKIKMLDS…LHLVARHPDL (76 aa)). 7 disordered regions span residues 92 to 118 (ARHPDLTPPGSLPNHSATEPNSSTGHG), 176 to 203 (TGLGRTSDFTGNPSRPQPEQAGFRISSD), 264 to 283 (RNEERGFVSSRLSSTPEGLS), 432 to 473 (ASTT…ASIA), 499 to 554 (SVNT…SSRV), 590 to 624 (EIHVEDPSSQGTTAGVTSAATSSGAAQAPEAEPNV), and 645 to 691 (HIGR…QKME). Polar residues-rich tracts occupy residues 104 to 118 (PNHSATEPNSSTGHG), 178 to 189 (LGRTSDFTGNPS), 273 to 283 (SRLSSTPEGLS), 446 to 465 (TQSASVQRNTGESSVNQTTS), and 499 to 523 (SVNTNNEQGSQPASQQHTAPHSTAE). Over residues 525–535 (TLHRQSMEDSA) the composition is skewed to basic and acidic residues. The span at 536–554 (RNGTLPTPNTQQEPSSSRV) shows a compositional bias: polar residues. A compositionally biased stretch (low complexity) spans 597–617 (SSQGTTAGVTSAATSSGAAQA).

In terms of assembly, interacts with CCAMK. Phosphorylated at the N-terminus by CCAMK. As to expression, highly epressed in roots. Expressed at very low levels in leaves and stems.

It localises to the nucleus. In terms of biological role, involved in root nodulation. Required for root nodule organogenesis after infection by symbiotic rhizobia. Probably not involved in arbuscular mycorrhizal (AM) symbiosis. Acts downstream of CCAMK. This Lotus japonicus (Lotus corniculatus var. japonicus) protein is Ubiquitin-like domain-containing protein CIP73.